The chain runs to 434 residues: Ribitol-5-phosphate xylosyltransferase 1 (434 aa).

At 1-7 the chain is on the cytoplasmic side; the sequence is MRFFRRK. Residues 8–28 traverse the membrane as a helical; Signal-anchor for type II membrane protein segment; it reads IAIIVILAYAIFSLYAAYNVF. At 29-434 the chain is on the extracellular side; that stretch reads FSKRVISRVH…VLEENFFKIT (406 aa).

Belongs to the TMEM5 family.

The protein resides in the golgi apparatus membrane. It catalyses the reaction 3-O-[Rib-ol-P-Rib-ol-P-3-beta-D-GalNAc-(1-&gt;3)-beta-D-GlcNAc-(1-&gt;4)-(O-6-P-alpha-D-Man)]-Thr-[protein] + UDP-alpha-D-xylose = 3-O-[beta-D-Xyl-(1-&gt;4)-Rib-ol-P-Rib-ol-P-3-beta-D-GalNAc-(1-&gt;3)-beta-D-GlcNAc-(1-&gt;4)-(O-6-P-alpha-D-Man)]-Thr-[protein] + UDP + H(+). The protein operates within protein modification; protein glycosylation. In terms of biological role, acts as a UDP-D-xylose:ribitol-5-phosphate beta1,4-xylosyltransferase, which catalyzes the transfer of UDP-D-xylose to ribitol 5-phosphate (Rbo5P) to form the Xylbeta1-4Rbo5P linkage on O-mannosyl glycan. Participates in the biosynthesis of the phosphorylated O-mannosyl trisaccharide (N-acetylgalactosamine-beta-3-N-acetylglucosamine-beta-4-(phosphate-6-)mannose), a carbohydrate structure present in alpha-dystroglycan (DAG1), which is required for binding laminin G-like domain-containing extracellular proteins with high affinity. The protein is Ribitol-5-phosphate xylosyltransferase 1 (rxylt1) of Danio rerio (Zebrafish).